We begin with the raw amino-acid sequence, 355 residues long: Ribosomal RNA small subunit methyltransferase H (355 aa).

Residues 47–49 (GGY), Asp-65, Phe-92, Asp-113, and Gln-120 contribute to the S-adenosyl-L-methionine site. The segment at 332–355 (LLPLATLPETSHPKSASHSKSRRR) is disordered. Residues 346-355 (SASHSKSRRR) are compositionally biased toward basic residues.

Belongs to the methyltransferase superfamily. RsmH family.

It localises to the cytoplasm. It catalyses the reaction cytidine(1402) in 16S rRNA + S-adenosyl-L-methionine = N(4)-methylcytidine(1402) in 16S rRNA + S-adenosyl-L-homocysteine + H(+). Specifically methylates the N4 position of cytidine in position 1402 (C1402) of 16S rRNA. This chain is Ribosomal RNA small subunit methyltransferase H, found in Beijerinckia indica subsp. indica (strain ATCC 9039 / DSM 1715 / NCIMB 8712).